The chain runs to 368 residues: MTLQQKELFQKSPLLLENGETLSPVLVGYETYGTLSASRDNCILLEHALTGTAHAAKHFEDDAPGWWDDYIGPGKTIDTDKYFLVCTNVFGGCSGTTGPSSINPKTGEPFRLQFPGFSIKDIIKVQRELLEQLGVTRIVSVIGGSMGGMQATEWAIDYADITDSIINIASPLAAGPDAIGYNLIMRMAILNDPDFNGGNYIGQPEGGLATARMVGMMTYRTSELFSKRFERFTVAESSPAAFSKEHFQIESYLQYQGDTFVERFDANSYLYLTKAIDLFDVTAPAKDDLPAFSKIKIPYLLIGITTDQLFRIHDLRRGYELLKEWDVPVTYHEVASEYGHDAFLVEKEVPKFEPLIRSFLNNLPVKSI.

Residues 43-346 (ILLEHALTGT…EYGHDAFLVE (304 aa)) form the AB hydrolase-1 domain. Catalysis depends on Ser145, which acts as the Nucleophile. Position 212 (Arg212) interacts with substrate. Residues Asp307 and His340 contribute to the active site. Asp341 provides a ligand contact to substrate.

This sequence belongs to the AB hydrolase superfamily. MetX family. As to quaternary structure, homodimer.

It is found in the cytoplasm. The catalysed reaction is L-homoserine + acetyl-CoA = O-acetyl-L-homoserine + CoA. It participates in amino-acid biosynthesis; L-methionine biosynthesis via de novo pathway; O-acetyl-L-homoserine from L-homoserine: step 1/1. In terms of biological role, transfers an acetyl group from acetyl-CoA to L-homoserine, forming acetyl-L-homoserine. The sequence is that of Homoserine O-acetyltransferase from Listeria innocua serovar 6a (strain ATCC BAA-680 / CLIP 11262).